The primary structure comprises 1312 residues: Tetratricopeptide repeat protein 21B (1312 aa).

TPR repeat units lie at residues 4–38, 110–143, 147–180, 182–213, 214–247, and 325–358; these read TDHY…YSND, PKAL…SNRS, LVLR…NKDI, ALIG…YPPF, LPAL…DGAN, and AEVA…DGNH. Positions 365–392 form a coiled coil; the sequence is VIQCQILQGQLEEAEQQLDFLHEIQESI. TPR repeat units follow at residues 493–526, 528–560, 564–597, 615–648, 720–753, 755–787, 789–820, 829–861, 881–914, 916–947, 948–981, 983–1015, 1019–1052, 1193–1226, 1228–1260, and 1262–1295; these read TEPL…DTAC, DFHL…NFKV, PLYH…QEMK, VSIY…FGGT, PHTS…NPQD, SLAN…SGQD, LCCD…EPVS, AKCL…QQRI, SEIC…SQDS, VKLQ…HSFK, EEAA…NPDN, AVLS…SSRT, PGYN…SEWG, EKSW…NKSC, KAYE…SNQS, and PAVG…HPTY.

This sequence belongs to the TTC21 family. In terms of assembly, component of the IFT complex A (IFT-A).

Component of the IFT complex A (IFT-A), a complex required for retrograde ciliary transport and entry into cilia of G protein-coupled receptors (GPCRs). Negatively modulates the SHH signal transduction. This is Tetratricopeptide repeat protein 21B (ttc21b) from Xenopus laevis (African clawed frog).